The sequence spans 31 residues: MLIQLKIKLLLLLLLYLLYIFYVFLWKQSEF.

In terms of biological role, involved in control of the biosynthesis of leucine. The chain is leu operon leader peptide (leuL) from Buchnera aphidicola subsp. Rhopalosiphum padi.